The chain runs to 547 residues: CTP synthase (547 aa).

The amidoligase domain stretch occupies residues methionine 1–leucine 266. Serine 13 contacts CTP. Serine 13 is a UTP binding site. Position 14–19 (serine 14–isoleucine 19) interacts with ATP. Residue tyrosine 54 coordinates L-glutamine. Aspartate 71 contacts ATP. The Mg(2+) site is built by aspartate 71 and glutamate 141. CTP is bound by residues aspartate 148 to glutamate 150, lysine 187 to glutamine 192, and lysine 223. UTP contacts are provided by residues lysine 187–glutamine 192 and lysine 223. Residues proline 291–alanine 533 form the Glutamine amidotransferase type-1 domain. Residue glycine 353 participates in L-glutamine binding. The Nucleophile; for glutamine hydrolysis role is filled by cysteine 380. Residues leucine 381–glutamine 384, glutamate 404, and arginine 461 contribute to the L-glutamine site. Residues histidine 506 and glutamate 508 contribute to the active site.

Belongs to the CTP synthase family. Homotetramer.

The catalysed reaction is UTP + L-glutamine + ATP + H2O = CTP + L-glutamate + ADP + phosphate + 2 H(+). It carries out the reaction L-glutamine + H2O = L-glutamate + NH4(+). The enzyme catalyses UTP + NH4(+) + ATP = CTP + ADP + phosphate + 2 H(+). It participates in pyrimidine metabolism; CTP biosynthesis via de novo pathway; CTP from UDP: step 2/2. Its activity is regulated as follows. Allosterically activated by GTP, when glutamine is the substrate; GTP has no effect on the reaction when ammonia is the substrate. The allosteric effector GTP functions by stabilizing the protein conformation that binds the tetrahedral intermediate(s) formed during glutamine hydrolysis. Inhibited by the product CTP, via allosteric rather than competitive inhibition. Catalyzes the ATP-dependent amination of UTP to CTP with either L-glutamine or ammonia as the source of nitrogen. Regulates intracellular CTP levels through interactions with the four ribonucleotide triphosphates. The polypeptide is CTP synthase (Chloroflexus aggregans (strain MD-66 / DSM 9485)).